Reading from the N-terminus, the 273-residue chain is Small ribosomal subunit protein uS3 (273 aa).

The KH type-2 domain maps to 40–110; it reads IRNLFFVNYR…NLDLTINEIG (71 aa). Residues 244 to 265 show a composition bias toward polar residues; sequence QVLSANKLTGSDVETSSIQALT. The segment at 244–273 is disordered; that stretch reads QVLSANKLTGSDVETSSIQALTKPNKEDKQ.

This sequence belongs to the universal ribosomal protein uS3 family. As to quaternary structure, part of the 30S ribosomal subunit. Forms a tight complex with proteins S10 and S14.

Functionally, binds the lower part of the 30S subunit head. Binds mRNA in the 70S ribosome, positioning it for translation. The polypeptide is Small ribosomal subunit protein uS3 (Mycoplasma pneumoniae (strain ATCC 29342 / M129 / Subtype 1) (Mycoplasmoides pneumoniae)).